A 487-amino-acid chain; its full sequence is Probable cobyric acid synthase (487 aa).

A GATase cobBQ-type domain is found at 249-435 (DVDIAVVRFP…LHGIFNNASF (187 aa)). Cys-328 acts as the Nucleophile in catalysis. His-427 is an active-site residue.

Belongs to the CobB/CobQ family. CobQ subfamily.

Its pathway is cofactor biosynthesis; adenosylcobalamin biosynthesis. In terms of biological role, catalyzes amidations at positions B, D, E, and G on adenosylcobyrinic A,C-diamide. NH(2) groups are provided by glutamine, and one molecule of ATP is hydrogenolyzed for each amidation. The polypeptide is Probable cobyric acid synthase (Methanocella arvoryzae (strain DSM 22066 / NBRC 105507 / MRE50)).